A 516-amino-acid polypeptide reads, in one-letter code: Putative Rieske 2Fe-2S iron-sulfur protein MT3926 (516 aa).

One can recognise a Rieske domain in the interval 429–516 (LYTFFKCLTD…RGHQLRSSRP (88 aa)). [2Fe-2S] cluster is bound by residues C469, H471, C489, and H492.

It depends on [2Fe-2S] cluster as a cofactor.

This chain is Putative Rieske 2Fe-2S iron-sulfur protein MT3926, found in Mycobacterium tuberculosis (strain CDC 1551 / Oshkosh).